Reading from the N-terminus, the 341-residue chain is Fructose-1,6-bisphosphatase, cytosolic (341 aa).

Mg(2+) is bound by residues Glu71, Glu100, Asp121, Leu123, and Asp124. Residues 124 to 127, Asn215, Tyr247, Tyr267, and Lys277 contribute to the substrate site; that span reads DGSS. Residue Glu283 coordinates Mg(2+).

Belongs to the FBPase class 1 family. Mg(2+) is required as a cofactor.

It is found in the cytoplasm. Its subcellular location is the nucleus. The catalysed reaction is beta-D-fructose 1,6-bisphosphate + H2O = beta-D-fructose 6-phosphate + phosphate. In terms of biological role, catalyzes the first irreversible reaction from fructose-1,6-bisphosphate to fructose-6-phosphate and inorganic phosphate and plays an important regulatory role in sucrose biosynthesis and metabolism. Its activity is essential to regulate starch levels. Functions in fructose-mediated signaling independently of its catalytic activity in sugar metabolism. May act downstream of ABA2/GIN1, which is involved in abscisic acid (ABA) synthesis to regulate autotrophic transition and modulate early seedling establishment after seed germination. The chain is Fructose-1,6-bisphosphatase, cytosolic from Arabidopsis thaliana (Mouse-ear cress).